The following is a 232-amino-acid chain: N-(5'-phosphoribosyl)anthranilate isomerase (232 aa).

This sequence belongs to the TrpF family.

The enzyme catalyses N-(5-phospho-beta-D-ribosyl)anthranilate = 1-(2-carboxyphenylamino)-1-deoxy-D-ribulose 5-phosphate. Its pathway is amino-acid biosynthesis; L-tryptophan biosynthesis; L-tryptophan from chorismate: step 3/5. The protein is N-(5'-phosphoribosyl)anthranilate isomerase (TRP1) of Wickerhamomyces anomalus (Yeast).